Consider the following 274-residue polypeptide: Diaminopimelate epimerase (274 aa).

Substrate-binding residues include Asn-11, Gln-44, and Asn-64. The active-site Proton donor is the Cys-73. Residues 74–75, Asn-157, Asn-190, and 208–209 contribute to the substrate site; these read GN and ER. Cys-217 serves as the catalytic Proton acceptor. 218-219 lines the substrate pocket; that stretch reads GS.

It belongs to the diaminopimelate epimerase family. As to quaternary structure, homodimer.

It is found in the cytoplasm. The enzyme catalyses (2S,6S)-2,6-diaminopimelate = meso-2,6-diaminopimelate. Its pathway is amino-acid biosynthesis; L-lysine biosynthesis via DAP pathway; DL-2,6-diaminopimelate from LL-2,6-diaminopimelate: step 1/1. Functionally, catalyzes the stereoinversion of LL-2,6-diaminopimelate (L,L-DAP) to meso-diaminopimelate (meso-DAP), a precursor of L-lysine and an essential component of the bacterial peptidoglycan. The protein is Diaminopimelate epimerase of Actinobacillus pleuropneumoniae serotype 3 (strain JL03).